Here is a 150-residue protein sequence, read N- to C-terminus: DNA-directed RNA polymerases I, II, and III subunit RPABC3 (150 aa).

Ala2 carries the N-acetylalanine modification.

It belongs to the eukaryotic RPB8 RNA polymerase subunit family. In terms of assembly, component of the RNA polymerase I (Pol I), RNA polymerase II (Pol II) and RNA polymerase III (Pol III) complexes consisting of at least 13, 12 and 17 subunits, respectively. Pol I complex consists of a ten-subunit catalytic core composed of POLR1A/RPA1, POLR1B/RPA2, POLR1C/RPAC1, POLR1D/RPAC2, POLR1H/RPA12, POLR2E/RPABC1, POLR2F/RPABC2, POLR2H/RPABC3, POLR2K/RPABC4 and POLR2L/RPABC5; a mobile stalk subunit POLR1F/RPA43 protruding from the core and additional subunits homologous to general transcription factors POLR1E/RPA49 and POLR1G/RPA34. Part of Pol I pre-initiation complex (PIC), in which Pol I core assembles with RRN3 and promoter-bound UTBF and SL1/TIF-IB complex. Pol II complex contains a ten-subunit catalytic core composed of POLR2A/RPB1, POLR2B/RPB2, POLR2C/RPB3, POLR2I/RPB9, POLR2J/RPB11, POLR2E/RPABC1, POLR2F/RPABC2, POLR2H/RPABC3, POLR2K/RPABC4 and POLR2L/RPABC5 and a mobile stalk composed of two subunits POLR2D/RPB4 and POLR2G/RPB7. Part of Pol II(G) complex, in which Pol II core associates with an additional subunit POLR2M; unlike conventional Pol II, Pol II(G) functions as a transcriptional repressor. Part of Pol II pre-initiation complex (PIC), in which Pol II core assembles with Mediator, general transcription factors and other specific initiation factors including GTF2E1, GTF2E2, GTF2F1, GTF2F2, TCEA1, ERCC2, ERCC3, GTF2H2, GTF2H3, GTF2H4, GTF2H5, GTF2A1, GTF2A2, GTF2B and TBP; this large multi-subunit PIC complex mediates DNA unwinding and targets Pol II core to the transcription start site where the first phosphodiester bond forms. Directly interacts with POLR2A. Pol III complex consists of a ten-subunit catalytic core composed of POLR3A/RPC1, POLR3B/RPC2, POLR1C/RPAC1, POLR1D/RPAC2, POLR3K/RPC10, POLR2E/RPABC1, POLR2F/RPABC2, POLR2H/RPABC3, POLR2K/RPABC4 and POLR2L/RPABC5; a mobile stalk composed of two subunits POLR3H/RPC8 and CRCP/RPC9, protruding from the core and functioning primarily in transcription initiation; and additional subunits homologous to general transcription factors of the RNA polymerase II machinery, POLR3C/RPC3-POLR3F/RPC6-POLR3G/RPC7 heterotrimer required for transcription initiation and POLR3D/RPC4-POLR3E/RPC5 heterodimer involved in both transcription initiation and termination.

It localises to the nucleus. Its subcellular location is the nucleolus. Its function is as follows. DNA-dependent RNA polymerase catalyzes the transcription of DNA into RNA using the four ribonucleoside triphosphates as substrates. Common component of RNA polymerases I, II and III which synthesize ribosomal RNA precursors, mRNA precursors and many functional non-coding RNAs, and small RNAs, such as 5S rRNA and tRNAs, respectively. In Bos taurus (Bovine), this protein is DNA-directed RNA polymerases I, II, and III subunit RPABC3 (POLR2H).